Reading from the N-terminus, the 470-residue chain is Glutamate--tRNA ligase 2 (470 aa).

The short motif at Pro11–Gly21 is the 'HIGH' region element. Positions Lys238–Arg242 match the 'KMSKS' region motif. Lys241 contacts ATP.

It belongs to the class-I aminoacyl-tRNA synthetase family. Glutamate--tRNA ligase type 1 subfamily. As to quaternary structure, monomer.

It is found in the cytoplasm. The enzyme catalyses tRNA(Glu) + L-glutamate + ATP = L-glutamyl-tRNA(Glu) + AMP + diphosphate. Functionally, catalyzes the attachment of glutamate to tRNA(Glu) in a two-step reaction: glutamate is first activated by ATP to form Glu-AMP and then transferred to the acceptor end of tRNA(Glu). The chain is Glutamate--tRNA ligase 2 from Ehrlichia ruminantium (strain Gardel).